The chain runs to 292 residues: Small ribosomal subunit protein uS5 (292 aa).

Residues 1 to 56 (MADDAGAAGGPGGPGGPGMGGRGGFRGGFGSGIRGRGRGRGRGRGRGRGARGGKAE) form a disordered region. Position 2 is an N-acetylalanine (Ala-2). Residues 7–34 (AAGGPGGPGGPGMGGRGGFRGGFGSGIR) show a composition bias toward gly residues. Over residues 35 to 51 (GRGRGRGRGRGRGRGAR) the composition is skewed to basic residues. Glycyl lysine isopeptide (Lys-Gly) (interchain with G-Cter in ubiquitin) cross-links involve residues Lys-54 and Lys-58. The S5 DRBM domain occupies 102-165 (LKDEVLKIMP…ILAKLSIVPV (64 aa)). Residue Thr-251 is modified to Phosphothreonine. An N6-acetyllysine modification is found at Lys-262. At Ser-263 the chain carries Phosphoserine. The residue at position 269 (Thr-269) is a Phosphothreonine. Lys-274 carries the post-translational modification N6-acetyllysine; alternate. Residue Lys-274 forms a Glycyl lysine isopeptide (Lys-Gly) (interchain with G-Cter in SUMO1); alternate linkage. A Glycyl lysine isopeptide (Lys-Gly) (interchain with G-Cter in SUMO2); alternate cross-link involves residue Lys-274. A Glycyl lysine isopeptide (Lys-Gly) (interchain with G-Cter in ubiquitin); alternate cross-link involves residue Lys-274. Ser-280 carries the phosphoserine modification.

It belongs to the universal ribosomal protein uS5 family. As to quaternary structure, component of the small ribosomal subunit. Interacts with zinc finger protein ZNF277 (via zinc-finger domains); the interaction is direct; the interaction is extra-ribosomal. Interaction with ZNF277 competes with the binding of RPS2 to protein arginine methyltransferase PRMT3. Citrullinated by PADI4 in the Arg/Gly-rich region. In terms of processing, asymmetric arginine dimethylation by PRMT3 occurs at multiple sites in the Arg/Gly-rich region. Post-translationally, monoubiquitinated at Lys-54 and Lys-58 by RNF10 when a ribosome has stalled during translation, leading to its degradation by the proteasome. Deubiquitinated at Lys-54 and Lys-58 by USP10, preventing degradation by the proteasome and promoting 40S ribosome subunit recycling following ribosome dissociation.

The protein localises to the cytoplasm. Its subcellular location is the nucleus. The protein resides in the nucleolus. In terms of biological role, component of the ribosome, a large ribonucleoprotein complex responsible for the synthesis of proteins in the cell. The small ribosomal subunit (SSU) binds messenger RNAs (mRNAs) and translates the encoded message by selecting cognate aminoacyl-transfer RNA (tRNA) molecules. The large subunit (LSU) contains the ribosomal catalytic site termed the peptidyl transferase center (PTC), which catalyzes the formation of peptide bonds, thereby polymerizing the amino acids delivered by tRNAs into a polypeptide chain. The nascent polypeptides leave the ribosome through a tunnel in the LSU and interact with protein factors that function in enzymatic processing, targeting, and the membrane insertion of nascent chains at the exit of the ribosomal tunnel. Plays a role in the assembly and function of the 40S ribosomal subunit. The chain is Small ribosomal subunit protein uS5 (RPS2) from Oryctolagus cuniculus (Rabbit).